The sequence spans 1003 residues: Translation initiation factor IF-2 (1003 aa).

The tract at residues 36-392 (SSTIEPPVVK…RQKRNEYESM (357 aa)) is disordered. The segment covering 62-151 (AAKPAAAKPA…PKPAAAAKPA (90 aa)) has biased composition (low complexity). Pro residues-rich tracts occupy residues 178 to 190 (DGMPRPMGKPAPK) and 213 to 230 (PRPGGGPRPGGGPRPGGG). 2 stretches are compositionally biased toward gly residues: residues 231–243 (PRPQGQGRPGGQR) and 255–271 (GNRGGQRQGAGAGGPRP). The span at 273–286 (GGPRPQGGSRPQGG) shows a compositional bias: low complexity. Positions 329–372 (GKGGRGGQAGGGAGGGFNRGGGTGGGAGRGGRRGGTAGAFGRPG) are enriched in gly residues. A compositionally biased stretch (basic residues) spans 376–385 (RRGRKSKRQK). The tr-type G domain maps to 498–670 (KRPPVVTVMG…VCLTADAELD (173 aa)). The G1 stretch occupies residues 507–514 (GHVDHGKT). 507-514 (GHVDHGKT) is a binding site for GTP. Residues 532–536 (GITQG) form a G2 region. Residues 557 to 560 (DTPG) are G3. Residues 557-561 (DTPGH) and 611-614 (NKID) contribute to the GTP site. Residues 611–614 (NKID) are G4. The tract at residues 647–649 (SAK) is G5.

This sequence belongs to the TRAFAC class translation factor GTPase superfamily. Classic translation factor GTPase family. IF-2 subfamily.

It is found in the cytoplasm. Its function is as follows. One of the essential components for the initiation of protein synthesis. Protects formylmethionyl-tRNA from spontaneous hydrolysis and promotes its binding to the 30S ribosomal subunits. Also involved in the hydrolysis of GTP during the formation of the 70S ribosomal complex. This Corynebacterium glutamicum (strain R) protein is Translation initiation factor IF-2.